The chain runs to 322 residues: Arginase (322 aa).

Mn(2+)-binding residues include histidine 113, aspartate 141, histidine 143, and aspartate 145. Substrate-binding positions include 143-147 (HADIN), 154-156 (SGN), and aspartate 200. Mn(2+) contacts are provided by aspartate 247 and aspartate 249. The substrate site is built by threonine 261 and glutamate 292.

The protein belongs to the arginase family. In terms of assembly, homotrimer. Mn(2+) serves as cofactor.

It catalyses the reaction L-arginine + H2O = urea + L-ornithine. It participates in nitrogen metabolism; urea cycle; L-ornithine and urea from L-arginine: step 1/1. This Coccidioides immitis (strain RS) (Valley fever fungus) protein is Arginase (ARG).